The primary structure comprises 299 residues: Phosphatidylinositol-3-phosphatase (299 aa).

An N-terminal signal peptide occupies residues 1 to 43 (MLRGIQALSRPLTRVYRALAVIGVLAASLLASWVGAVPQVGLA).

In terms of assembly, monomer. SapM interacts with host RAB7 via its C-terminus. A metal cation serves as cofactor.

The protein localises to the secreted. The protein resides in the host cytoplasmic vesicle. It localises to the host phagosome. The catalysed reaction is a phosphate monoester + H2O = an alcohol + phosphate. The enzyme catalyses a 1,2-diacyl-sn-glycero-3-phospho-(1D-myo-inositol-3-phosphate) + H2O = a 1,2-diacyl-sn-glycero-3-phospho-(1D-myo-inositol) + phosphate. Phosphatase activity is inhibited in vitro by low concentrations of several heavy metals (zinc chloride, sodium molybdate, magnesium chloride, and copper sulfate) and moderately high concentrations (&gt;8 mM) of EDTA. Virulence factor that plays an important role in blocking phagosome-lysosome fusion and thus participates in the intracellular survival of the pathogen. Acts as a phosphatase that dephosphorylates phosphatidylinositol 3-phosphate (PI3P), a membrane trafficking regulatory lipid essential for phagosomal acquisition of lysosomal constituents. Therefore, SapM eliminates PI3P from the phagosomal membrane by catalyzing its hydrolysis, and thus contributes to inhibition of phagosome maturation. Also interferes with autophagy: SapM blocks autophagosome-lysosome fusion in macrophages by binding to the small GTPase RAB7, which prevents RAB7 from being involved in this process and thus negatively regulates autophagy flux. In vitro, displays phosphatase activity with broad specificity; can dephosphorylate a variety of phosphoester substrates, with the highest activity against phosphoenolpyruvate, glycerophosphate, GTP, NADPH, phosphotyrosine and trehalose-6-phosphate. In contrast, the enzyme exhibits poor activity against glucose-6-phosphate, phosphothreonine, and a number of nucleotides (NADP, ATP, AMP, and GMP). This chain is Phosphatidylinositol-3-phosphatase, found in Mycobacterium tuberculosis (strain ATCC 25618 / H37Rv).